Consider the following 183-residue polypeptide: Efficient mitochondria targeting-associated protein 19 (183 aa).

The Cytoplasmic segment spans residues 1–25; it reads MKVVSLRRIYSSEIYKLPTTRLHMD. Residues 24-156 form the EXPERA domain; it reads MDTLYYYYFV…PYLAIPLWMA (133 aa). The chain crosses the membrane as a helical span at residues 26–46; sequence TLYYYYFVSHLAAALFVDLPI. The Lumenal portion of the chain corresponds to 47 to 81; that stretch reads TEWLGGSLSCLSGLRRFYLSTYEDPILLIPAPWKT. The chain crosses the membrane as a helical span at residues 82 to 102; that stretch reads ALFSSELFFQVPFFIWVSLRL. Over 103-110 the chain is Cytoplasmic; it reads RKKARDPV. Residues 111–131 traverse the membrane as a helical segment; the sequence is LWVAILIYGVHAFTTTWCCMF. Residues 132 to 138 are Lumenal-facing; that stretch reads ELFAEKK. The helical transmembrane segment at 139-159 threads the bilayer; it reads WMIMSFYFPYLAIPLWMAIDM. Residues 160–183 lie on the Cytoplasmic side of the membrane; it reads GGRLVKSCHAAKSGPSSTITSKSD.

The protein belongs to the TMEM97/sigma-2 receptor family.

Its subcellular location is the endoplasmic reticulum membrane. Functionally, part of an import route for newly synthesized mitochondrial proteins termed the ER-SURF pathway (ER surface-mediated protein targeting), which retrieves mitochondrial precursor proteins from the ER surface and reroutes them to mitochondria for efficient mitochondrial import. Acts as a quality control factor in the ER, promoting the proteolytic degradation of nonproductive and extramitochondrial precursor proteins in the ER membrane thus removing them from the ER surface. The protein is Efficient mitochondria targeting-associated protein 19 (ema19) of Schizosaccharomyces pombe (strain 972 / ATCC 24843) (Fission yeast).